Consider the following 275-residue polypeptide: Large ribosomal subunit protein uL2cz (275 aa).

Disordered stretches follow at residues Met1–Ser20 and Asn225–Lys275.

This sequence belongs to the universal ribosomal protein uL2 family. In terms of assembly, part of the 50S ribosomal subunit.

It is found in the plastid. The protein localises to the chloroplast. The chain is Large ribosomal subunit protein uL2cz (rpl2-A) from Populus alba (White poplar).